A 770-amino-acid chain; its full sequence is Low-density lipoprotein receptor-related protein 3 (770 aa).

Positions 1 to 36 (MEKRAAAGLEGAPGARAQLAVVCLVNIFLTGRLSSA) are cleaved as a signal peptide. Over 37–496 (VPALAACSGK…HGCLAAVPRK (460 aa)) the chain is Extracellular. 9 disulfide bridges follow: Cys43–Cys72, Cys99–Cys120, Cys166–Cys178, Cys173–Cys191, Cys185–Cys200, Cys212–Cys227, Cys219–Cys240, Cys234–Cys249, and Cys254–Cys282. The CUB 1 domain maps to 43–159 (CSGKLEQHTE…QGFRLSYIRG (117 aa)). The N-linked (GlcNAc...) asparagine glycan is linked to Asn71. LDL-receptor class A domains are found at residues 165 to 201 (SCQADEFRCDNGKCLPGPWQCNTVDECGDGSDEGNCS) and 211 to 250 (LCPGGTFPCSGARSTRCLPVERRCDGLQDCGDGSDEAGCP). The N-linked (GlcNAc...) asparagine glycan is linked to Asn199. The CUB 2 domain occupies 254 to 365 (CGRRLGSFYG…HGFNATYQVK (112 aa)). Residue Asn359 is glycosylated (N-linked (GlcNAc...) asparagine). LDL-receptor class A domains are found at residues 415–453 (ACPPDQYPCEGGSGLCYTPADRCNNQKSCPDGADEKNCF) and 454–490 (SCQPGTFHCGTNLCIFETWRCDGQEDCQDGSDEHGCL). Intrachain disulfides connect Cys416/Cys430, Cys423/Cys443, Cys437/Cys452, Cys455/Cys467, Cys462/Cys480, and Cys474/Cys489. A helical membrane pass occupies residues 497-517 (VITAALIGSLVCGLLLVIALG). The Cytoplasmic portion of the chain corresponds to 518 to 770 (CAFKLYSLRT…ASDDEALLVC (253 aa)). The interval 635–770 (LGDGFLQPAP…ASDDEALLVC (136 aa)) is disordered. Basic and acidic residues predominate over residues 689-707 (RDPECRPVDKDRKVCREPL). Residues 729 to 738 (QVSTASSTLG) show a composition bias toward polar residues. Acidic residues predominate over residues 761 to 770 (ASDDEALLVC).

This sequence belongs to the LDLR family. Binds GGA1 and GGA2. In terms of tissue distribution, widely expressed. Highly expressed in skeletal muscle and ovary. Expressed at intermediate level in heart, brain, liver, pancreas, prostate and small intestine. Weakly expressed in testis, colon and leukocyte.

The protein resides in the membrane. Its subcellular location is the coated pit. In terms of biological role, probable receptor, which may be involved in the internalization of lipophilic molecules and/or signal transduction. Its precise role is however unclear, since it does not bind to very low density lipoprotein (VLDL) or to LRPAP1 in vitro. This chain is Low-density lipoprotein receptor-related protein 3 (LRP3), found in Homo sapiens (Human).